We begin with the raw amino-acid sequence, 257 residues long: Acetylglutamate kinase (257 aa).

Substrate contacts are provided by residues 43–44 (GG), arginine 65, and asparagine 157. Residues 180 to 185 (DVSGIL) and 208 to 210 (IIT) contribute to the ATP site.

It belongs to the acetylglutamate kinase family. ArgB subfamily. Homodimer.

It is found in the cytoplasm. The catalysed reaction is N-acetyl-L-glutamate + ATP = N-acetyl-L-glutamyl 5-phosphate + ADP. Its pathway is amino-acid biosynthesis; L-arginine biosynthesis; N(2)-acetyl-L-ornithine from L-glutamate: step 2/4. In terms of biological role, catalyzes the ATP-dependent phosphorylation of N-acetyl-L-glutamate. This is Acetylglutamate kinase from Photorhabdus laumondii subsp. laumondii (strain DSM 15139 / CIP 105565 / TT01) (Photorhabdus luminescens subsp. laumondii).